The chain runs to 237 residues: Large ribosomal subunit protein bL25 (237 aa).

An N-terminal domain region spans residues 1–104 (MELTAKPRTP…SVPVHTTGRS (104 aa)). The segment at 105 to 189 (QGEVQGGLVD…ELEAEVQAAQ (85 aa)) is middle domain. Positions 190-237 (VAGLVAAGELSEEAAEAVLEGDASLEEVKAEASEDNAGTDSEDNSDAQ) are C-terminal domain. The tract at residues 205-237 (EAVLEGDASLEEVKAEASEDNAGTDSEDNSDAQ) is disordered.

The protein belongs to the bacterial ribosomal protein bL25 family. CTC subfamily. Part of the 50S ribosomal subunit. Contacts proteins L11 and L16, the A site tRNA, and the 5S and 23S rRNAs.

Its function is as follows. This is one of 3 proteins that mediate the attachment of the 5S rRNA onto the large ribosomal subunit. This protein has three domains. The N-terminal one is bound on the solvent face, the middle domain fills the space between the 5S rRNA and the L11 arm contacting the 23S rRNA while the C-terminal domain is on the edge of the intersubunit interface and contacts the A site. The protein conformation changes upon binding of a tRNA mimic to the A site, although the mimic does not interact directly with CTC itself, consistent with CTCs presumed role in moderating A site binding. The protein is Large ribosomal subunit protein bL25 (rplY) of Deinococcus radiodurans (strain ATCC 13939 / DSM 20539 / JCM 16871 / CCUG 27074 / LMG 4051 / NBRC 15346 / NCIMB 9279 / VKM B-1422 / R1).